A 247-amino-acid chain; its full sequence is 3-deoxy-manno-octulosonate cytidylyltransferase (247 aa).

This sequence belongs to the KdsB family.

The protein localises to the cytoplasm. The enzyme catalyses 3-deoxy-alpha-D-manno-oct-2-ulosonate + CTP = CMP-3-deoxy-beta-D-manno-octulosonate + diphosphate. It participates in nucleotide-sugar biosynthesis; CMP-3-deoxy-D-manno-octulosonate biosynthesis; CMP-3-deoxy-D-manno-octulosonate from 3-deoxy-D-manno-octulosonate and CTP: step 1/1. Its pathway is bacterial outer membrane biogenesis; lipopolysaccharide biosynthesis. Activates KDO (a required 8-carbon sugar) for incorporation into bacterial lipopolysaccharide in Gram-negative bacteria. The polypeptide is 3-deoxy-manno-octulosonate cytidylyltransferase (Rhodopseudomonas palustris (strain BisA53)).